The primary structure comprises 1372 residues: Collagen alpha-2(I) chain (1372 aa).

The signal sequence occupies residues 1–22; sequence MLSFVDTRTLLLLAVTSCLATC. Residue Gln-23 is modified to Pyrrolidone carboxylic acid. Positions 23–85 are cleaved as a propeptide — N-terminal propeptide; sequence QYLQSGSVRK…PPGLTGNFAA (63 aa). Positions 28 to 1135 are disordered; that stretch reads GSVRKGPTGD…DQPRSQPSLR (1108 aa). A compositionally biased stretch (pro residues) spans 59–77; the sequence is MGPPGPPGSPGPPGSPAPP. The residue at position 90 (Lys-90) is an Allysine. The segment covering 95–146 has biased composition (low complexity); that stretch reads GPGPMGLMGPRGPPGAVGAPGPQGFQGPAGEPGEPGQTGPAGPRGPAGSPGK. Residues 147–161 show a composition bias toward basic and acidic residues; the sequence is AGEDGHPGKPGRPGE. Lys-183 carries the post-translational modification 5-hydroxylysine; alternate. O-linked (Gal...) hydroxylysine; alternate glycosylation is present at Lys-183. 7 stretches are compositionally biased toward low complexity: residues 231 to 260, 285 to 299, 306 to 327, 336 to 351, 390 to 416, 476 to 495, and 519 to 537; these read VGAP…SAGP, AGPR…LSGP, PGTN…AGAP, PGPA…RGLV, PGEA…LPGA, LPGI…RGEA, and PGLA…NGAQ. Positions 544–553 are enriched in gly residues; that stretch reads GVQGGKGEQG. The span at 600-639 shows a compositional bias: low complexity; sequence PGESGAAGPSGPIGSRGPSGAPGPDGNKGEAGAVGAPGSA. Residues 640 to 649 show a composition bias toward gly residues; that stretch reads GASGPGGLPG. Low complexity-rich tracts occupy residues 681-716 and 725-743; these read RGIP…PRGS and PAGP…QPGA. Over residues 744-753 the composition is skewed to basic and acidic residues; that stretch reads KGEKGTKGPK. Residues 755–771 are compositionally biased toward low complexity; sequence ENGIVGPTGSVGAAGPS. Gly residues predominate over residues 781 to 790; the sequence is GSRGDGGPPG. Composition is skewed to low complexity over residues 792–801, 855–882, 905–927, 957–978, and 987–1007; these read TGFPGAAGRT, SGEP…LGLP, ISGP…NGAP, PGSI…VGPA, and PGPA…PSGP. Residues 1011 to 1022 show a composition bias toward basic and acidic residues; the sequence is RGDKGEPGDKGH. The segment covering 1095–1107 has biased composition (pro residues); that stretch reads AGPPGPPGPPGPP. Residues 1126–1372 constitute a propeptide, C-terminal propeptide; the sequence is DQPRSQPSLR…RVEVGPVCFK (247 aa). Residues 1139–1372 enclose the Fibrillar collagen NC1 domain; that stretch reads YEVDATLKSL…RVEVGPVCFK (234 aa). 3 cysteine pairs are disulfide-bonded: Cys-1169/Cys-1201, Cys-1209/Cys-1370, and Cys-1278/Cys-1323. Asp-1187, Asn-1189, Gln-1190, Cys-1192, and Asp-1195 together coordinate Ca(2+). An N-linked (GlcNAc...) asparagine glycan is attached at Asn-1273.

The protein belongs to the fibrillar collagen family. In terms of assembly, trimers of one alpha 2(I) and two alpha 1(I) chains. Interacts (via C-terminus) with TMEM131 (via PapD-L domain); the interaction is direct and is involved in assembly and TRAPPIII ER-to-Golgi transport complex-dependent secretion of collagen. In terms of processing, prolines at the third position of the tripeptide repeating unit (G-X-Y) are hydroxylated in some or all of the chains. In terms of tissue distribution, expressed in kidney glomeruli.

It localises to the secreted. Its subcellular location is the extracellular space. It is found in the extracellular matrix. In terms of biological role, type I collagen is a member of group I collagen (fibrillar forming collagen). In Mus musculus (Mouse), this protein is Collagen alpha-2(I) chain (Col1a2).